Here is a 200-residue protein sequence, read N- to C-terminus: Adenylate kinase (200 aa).

An ATP-binding site is contributed by 10 to 15; the sequence is GAGKGT. The NMP stretch occupies residues 30–59; sequence STGDLFRANISQQTELGKLAKSYMDAGNLV. AMP is bound by residues T31, R36, 57-59, 84-87, and Q91; these read NLV and GFPR. The segment at 125 to 163 is LID; sequence GRRVCRNDSAHVFHVTYTPPKKEGVCDVCGGELYQRDDD. Residues R126 and 136–137 each bind ATP; that span reads VF. AMP contacts are provided by R160 and R171.

This sequence belongs to the adenylate kinase family. In terms of assembly, monomer.

The protein localises to the cytoplasm. The enzyme catalyses AMP + ATP = 2 ADP. Its pathway is purine metabolism; AMP biosynthesis via salvage pathway; AMP from ADP: step 1/1. In terms of biological role, catalyzes the reversible transfer of the terminal phosphate group between ATP and AMP. Plays an important role in cellular energy homeostasis and in adenine nucleotide metabolism. The protein is Adenylate kinase of Streptomyces lividans.